Here is a 560-residue protein sequence, read N- to C-terminus: Protein tweety homolog 3 (560 aa).

The Extracellular segment spans residues 1-43 (MAAVVNYSPPWWVNLFHRLPHFNLQFQQTSSDFRPDDSDYQKA). Residues 44–64 (VLLLGAAALVCLALDLLFLLF) form a helical membrane-spanning segment. Residues 65-87 (YSFWLCCCRRKNHDSPNADCCCT) lie on the Cytoplasmic side of the membrane. Residues 88 to 108 (AWCVIIATLVCSAGIAVGFYG) traverse the membrane as a helical segment. Over 109 to 212 (NGETCDGVTR…TEQYDWYRWL (104 aa)) the chain is Extracellular. Ca(2+)-binding residues include glutamate 111 and aspartate 114. Asparagine 127 and asparagine 145 each carry an N-linked (GlcNAc...) asparagine glycan. Residues 213–233 (GYLGLLLFDVIICLLVLVGLI) traverse the membrane as a helical segment. At 234–238 (RNSRS) the chain is on the cytoplasmic side. Residues 239-259 (ILIGVCFLGVLTLVISWASLG) form a helical membrane-spanning segment. Topologically, residues 260–387 (LEFSFAVGAS…LTGLCYDGVE (128 aa)) are extracellular. Intrachain disulfides connect cysteine 272-cysteine 382 and cysteine 300-cysteine 367. N-linked (GlcNAc...) asparagine glycosylation occurs at asparagine 352. The helical transmembrane segment at 388–408 (GLIYLVLFSFVTALMFSSIVC) threads the bilayer. Topologically, residues 409-560 (SVPHTWQSKR…AIHRPHSAIH (152 aa)) are cytoplasmic. 2 disordered regions span residues 415-435 (QSKR…GSRA) and 486-560 (TPRC…SAIH). Over residues 539–549 (TSRSAPNSRPN) the composition is skewed to polar residues.

The protein belongs to the tweety family. In terms of assembly, homotetramer; disulfide-linked. Forms cis-homodimers in the presence of Ca(2+).

The protein resides in the cell membrane. The catalysed reaction is chloride(in) = chloride(out). It carries out the reaction L-glutamate(out) = L-glutamate(in). Functionally, may act as a calcium-independent, swelling-dependent volume-regulated anion channel (VRAC-swell) which plays a pivotal role in the process of regulatory volume decrease (RVD) in the brain through the efflux of anions like chloride and organic osmolytes like glutamate. Probable large-conductance Ca(2+)-activated chloride channel. This Danio rerio (Zebrafish) protein is Protein tweety homolog 3 (ttyh3b).